Here is a 247-residue protein sequence, read N- to C-terminus: Probable cyclic nucleotide phosphodiesterase XBJ1_0953 (247 aa).

7 residues coordinate Fe cation: Asp8, His10, Asp52, Asn82, His154, His192, and His194. AMP contacts are provided by residues His10, Asp52, and Asn82–His83. An AMP-binding site is contributed by His194.

It belongs to the cyclic nucleotide phosphodiesterase class-III family. Fe(2+) serves as cofactor.

This chain is Probable cyclic nucleotide phosphodiesterase XBJ1_0953, found in Xenorhabdus bovienii (strain SS-2004) (Xenorhabdus nematophila subsp. bovienii).